The primary structure comprises 332 residues: L-lactate dehydrogenase A chain (332 aa).

NAD(+) is bound by residues Gly-29 to Lys-57 and Arg-99. Substrate-binding residues include Arg-106, Asn-138, and Arg-169. Asn-138 is an NAD(+) binding site. His-193 serves as the catalytic Proton acceptor. Residue Thr-248 coordinates substrate.

This sequence belongs to the LDH/MDH superfamily. LDH family. Homotetramer.

The protein resides in the cytoplasm. The catalysed reaction is (S)-lactate + NAD(+) = pyruvate + NADH + H(+). It participates in fermentation; pyruvate fermentation to lactate; (S)-lactate from pyruvate: step 1/1. Interconverts simultaneously and stereospecifically pyruvate and lactate with concomitant interconversion of NADH and NAD(+). The chain is L-lactate dehydrogenase A chain (LDHA) from Sceloporus undulatus (Eastern fence lizard).